The chain runs to 302 residues: Quinolinate synthase (302 aa).

Residues His24 and Ser41 each coordinate iminosuccinate. Cys86 is a binding site for [4Fe-4S] cluster. Iminosuccinate contacts are provided by residues 112–114 and Ser129; that span reads YVN. Cys173 is a [4Fe-4S] cluster binding site. Iminosuccinate-binding positions include 199 to 201 and Thr216; that span reads HPE. Position 259 (Cys259) interacts with [4Fe-4S] cluster.

This sequence belongs to the quinolinate synthase family. Type 2 subfamily. [4Fe-4S] cluster serves as cofactor.

It localises to the cytoplasm. The catalysed reaction is iminosuccinate + dihydroxyacetone phosphate = quinolinate + phosphate + 2 H2O + H(+). Its pathway is cofactor biosynthesis; NAD(+) biosynthesis; quinolinate from iminoaspartate: step 1/1. In terms of biological role, catalyzes the condensation of iminoaspartate with dihydroxyacetone phosphate to form quinolinate. This is Quinolinate synthase from Thermococcus kodakarensis (strain ATCC BAA-918 / JCM 12380 / KOD1) (Pyrococcus kodakaraensis (strain KOD1)).